The following is a 354-amino-acid chain: Dihydroflavonol 4-reductase (354 aa).

Residues Lys-44 and Tyr-163 each coordinate NADP(+).

Belongs to the NAD(P)-dependent epimerase/dehydratase family. Dihydroflavonol-4-reductase subfamily.

It catalyses the reaction a (2R,3S,4S)-leucoanthocyanidin + NADP(+) = a (2R,3R)-dihydroflavonol + NADPH + H(+). The enzyme catalyses (2S)-flavan-4-ol + NADP(+) = (2S)-flavanone + NADPH + H(+). Its pathway is pigment biosynthesis; anthocyanin biosynthesis. Its function is as follows. Bifunctional enzyme involved in flavonoid metabolism. This chain is Dihydroflavonol 4-reductase (ANT18), found in Hordeum vulgare (Barley).